The primary structure comprises 162 residues: NADH-quinone oxidoreductase subunit I (162 aa).

2 4Fe-4S ferredoxin-type domains span residues 53-83 and 93-122; these read LRRY…IESE and TRYD…EGPN. Residues cysteine 63, cysteine 66, cysteine 69, cysteine 73, cysteine 102, cysteine 105, cysteine 108, and cysteine 112 each coordinate [4Fe-4S] cluster.

The protein belongs to the complex I 23 kDa subunit family. NDH-1 is composed of 14 different subunits. Subunits NuoA, H, J, K, L, M, N constitute the membrane sector of the complex. Requires [4Fe-4S] cluster as cofactor.

The protein localises to the cell inner membrane. The enzyme catalyses a quinone + NADH + 5 H(+)(in) = a quinol + NAD(+) + 4 H(+)(out). Functionally, NDH-1 shuttles electrons from NADH, via FMN and iron-sulfur (Fe-S) centers, to quinones in the respiratory chain. The immediate electron acceptor for the enzyme in this species is believed to be ubiquinone. Couples the redox reaction to proton translocation (for every two electrons transferred, four hydrogen ions are translocated across the cytoplasmic membrane), and thus conserves the redox energy in a proton gradient. This is NADH-quinone oxidoreductase subunit I from Erythrobacter litoralis (strain HTCC2594).